Consider the following 78-residue polypeptide: MSSIEERVKKIVAEQLGVKEEEVKNEASFVEDLGADSLDTVELVMALEEEFETEIPDEEAEKITTVQLAIDYINANLA.

The region spanning 2-77 (SSIEERVKKI…LAIDYINANL (76 aa)) is the Carrier domain. O-(pantetheine 4'-phosphoryl)serine is present on Ser37.

The protein belongs to the acyl carrier protein (ACP) family. In terms of processing, 4'-phosphopantetheine is transferred from CoA to a specific serine of apo-ACP by AcpS. This modification is essential for activity because fatty acids are bound in thioester linkage to the sulfhydryl of the prosthetic group.

It is found in the cytoplasm. It functions in the pathway lipid metabolism; fatty acid biosynthesis. Carrier of the growing fatty acid chain in fatty acid biosynthesis. The chain is Acyl carrier protein from Cellvibrio japonicus (strain Ueda107) (Pseudomonas fluorescens subsp. cellulosa).